The chain runs to 71 residues: Ubiquinol-cytochrome c reductase complex assembly factor 6 (71 aa).

Residues 1-8 are Mitochondrial matrix-facing; that stretch reads MPAGVPMS. Residues 9–25 form a helical; Signal-anchor for type II membrane protein membrane-spanning segment; the sequence is TYLKMLAASLLAMCAGA. Residues 26 to 71 lie on the Mitochondrial intermembrane side of the membrane; that stretch reads EVVHRYYRPDLTIPEIPPKRGELKTELLGLKERKHKPQISQQEELK. Positions 52–71 are disordered; sequence LLGLKERKHKPQISQQEELK.

The protein belongs to the UQCC6 family. As to quaternary structure, interacts with UQCRC1. Interacts with UQCRQ. Interacts with UQCC5. Forms a complex, named COMB/coordinator of mitochondrial CYTB biogenesis, composed of UQCC1, UQCC2, UQCC4, UQCC5 and UQCC6; stabilizes nascent cytochrome b/MT-CYB and promotes its membrane insertion. Forms a complex, named COMA, composed of UQCC1, UQCC2 and UQCC4; activates MT-CYB translation. Forms a complex, named COMC, composed of UQCC1, UQCC2; UQCC3 and UQCC4; mediates MT-CYB hemylation and association with the first nuclear-encoded complex III subunit UQCRQ. Interacts with MT-CYB.

The protein localises to the mitochondrion inner membrane. In terms of biological role, required for the assembly and stability of the mitochondrial ubiquinol-cytochrome c reductase complex (complex III (CIII) or cytochrome b-c1 complex), a multisubunit transmembrane complex that is part of the mitochondrial electron transport chain (ETC) which drives oxidative phosphorylation. Mediates early complex III biogenesis. Participates in regulating the levels of electron transport chain proteins, and therefore energy supply, in response to changes in energy demand. Also required for cytochrome c oxidase complex (complex IV) assembly. This is Ubiquinol-cytochrome c reductase complex assembly factor 6 from Pongo abelii (Sumatran orangutan).